Consider the following 353-residue polypeptide: COMPASS component SPP1 (353 aa).

Residues 22–72 form a PHD-type zinc finger; it reads DVYCICKRPDYGELMVGCDGCDDWFHFTCLHIPEQFKDLVFSFYCPYCQAG. Positions 25, 27, 39, 42, 47, 50, 66, and 69 each coordinate Zn(2+). Residues 83–124 are non coventional C3H-type zinc finger; the sequence is NGEGSLPKTLWKRKCRISDCYKPCLQDSKYCSEEHGREFVND. Serine 87 carries the post-translational modification Phosphoserine. 4 residues coordinate Zn(2+): cysteine 97, cysteine 102, cysteine 113, and histidine 117. The span at 235 to 244 shows a compositional bias: basic and acidic residues; the sequence is VECGKEDSKG. The segment at 235–255 is disordered; sequence VECGKEDSKGTKRKKKKNSSR. Residues 245–255 show a composition bias toward basic residues; the sequence is TKRKKKKNSSR.

In terms of assembly, component of the Set1C/COMPASS complex which consists of SET1(2), BRE2(2), SPP1(2), SDC1(1), SHG1(1), SWD1(1), SWD2(1), and SWD3(1).

Its subcellular location is the nucleus. Component of the Set1C/COMPASS complex that specifically mono-, di- and trimethylates histone H3 to form H3K4me1/2/3, which subsequently plays a role in telomere length maintenance and transcription elongation regulation. COMPASS recognizes ubiquitinated H2B on one face of the nucleosome which stimulates the methylation of H3 on the opposing face. SPP1/CPS40 can recognize methylated histone lysine residue H3K4me3 or unmethylated H3K4. Stimulates the RNA binding activity of SET1. This is COMPASS component SPP1 from Saccharomyces cerevisiae (strain ATCC 204508 / S288c) (Baker's yeast).